A 367-amino-acid chain; its full sequence is Putative C-&gt;U-editing enzyme APOBEC-4 (367 aa).

One can recognise a CMP/dCMP-type deaminase domain in the interval 61 to 177; the sequence is PQTKHLTFYE…AWNREALRSL (117 aa). H93 contacts Zn(2+). The Proton donor role is filled by E95. Zn(2+)-binding residues include C127 and C134.

Belongs to the cytidine and deoxycytidylate deaminase family. It depends on Zn(2+) as a cofactor. As to expression, predominantly expressed in testis.

Its function is as follows. Putative C to U editing enzyme whose physiological substrate is not yet known. The sequence is that of Putative C-&gt;U-editing enzyme APOBEC-4 (APOBEC4) from Homo sapiens (Human).